The chain runs to 125 residues: Multifunctional methyltransferase subunit TRM112-like protein (125 aa).

Positions 2-119 (RLLTHNLLSS…SRGIPNMLLS (118 aa)) constitute a TRM112 domain. Ser-119 is modified (phosphoserine).

This sequence belongs to the TRM112 family. As to quaternary structure, part of the heterodimeric BUD23-TRM112 methyltransferase complex; this heterodimerization is necessary for the metabolic stability and activity of the catalytic subunit BUD23. Part of the heterodimeric N6AMT1-TRM112 methyltransferase complex; this heterodimerization is necessary for S-adenosyl-L-methionine-binding to N6AMT1/HEMK2. Part of the heterodimeric ALKBH8-TRM112 methyltransferase complex. Part of the heterodimeric METTL5-TRM112 methyltransferase complex; this heterodimerization is necessary for the stability of the catalytic subunit METTL5. Part of the heterodimeric THUMPD3-TRM112 methyltransferase complex; this complex forms an active tRNA methyltransferase, where TRMT112 acts as an activator of the catalytic subunit THUMPD3. Part of the heterodimeric THUMPD2-TRM112 methyltransferase complex; this complex forms an active tRNA methyltransferase, where TRMT112 acts as an activator of the catalytic subunit THUMPD2. Part of the heterodimeric TRMT11-TRM112 methyltransferase complex; this complex forms an active tRNA methyltransferase, where TRMT112 acts as an activator of the catalytic subunit TRMT11.

It is found in the nucleus. The protein resides in the nucleoplasm. Its subcellular location is the cytoplasm. It localises to the perinuclear region. In terms of biological role, acts as an activator of both rRNA/tRNA and protein methyltransferases. Together with methyltransferase BUD23, methylates the N(7) position of a guanine in 18S rRNA. The heterodimer with HEMK2/N6AMT1 catalyzes N5-methylation of ETF1 on 'Gln-185', using S-adenosyl L-methionine as methyl donor. The heterodimer with ALKBH8 catalyzes the methylation of 5-carboxymethyl uridine to 5-methylcarboxymethyl uridine at the wobble position of the anticodon loop in target tRNA species. Together with methyltransferase THUMPD3, catalyzes the formation of N(2)-methylguanosine at position 6 in a broad range of tRNA substrates and at position 7 of tRNA(Trp). Involved in the pre-rRNA processing steps leading to small-subunit rRNA production. Together with methyltransferase METTL5, specifically methylates the 6th position of adenine in position 1832 of 18S rRNA. The protein is Multifunctional methyltransferase subunit TRM112-like protein (TRMT112) of Bos taurus (Bovine).